The primary structure comprises 213 residues: 3-demethoxyubiquinol 3-hydroxylase (213 aa).

Fe cation contacts are provided by glutamate 62, glutamate 92, histidine 95, glutamate 144, glutamate 176, and histidine 179.

Belongs to the COQ7 family. The cofactor is Fe cation.

Its subcellular location is the cell membrane. The enzyme catalyses a 5-methoxy-2-methyl-3-(all-trans-polyprenyl)benzene-1,4-diol + AH2 + O2 = a 3-demethylubiquinol + A + H2O. The protein operates within cofactor biosynthesis; ubiquinone biosynthesis. Its function is as follows. Catalyzes the hydroxylation of 2-nonaprenyl-3-methyl-6-methoxy-1,4-benzoquinol during ubiquinone biosynthesis. The polypeptide is 3-demethoxyubiquinol 3-hydroxylase (Chromohalobacter salexigens (strain ATCC BAA-138 / DSM 3043 / CIP 106854 / NCIMB 13768 / 1H11)).